A 668-amino-acid polypeptide reads, in one-letter code: MAKITLDEAKKEAASLRTKLDEWADAYYSKDAPEVEDNVYDQSYNRLLELEKAFPEIVTPDSITQRVGGEIDSDFTKVNHPIPMLSMGDVFSKDELKEFDQRMQKLVGHPVEYNVELKIDGLSLSLEYQDGKLVRASTRGNGYIGEDVTANARYIADIPQVLPEPLTIEVRGECYMGKEAFAKLNQEREDEGLSVFANPRNAAAGSLRQLDPKVTKKRQLSTFIYTWVNPPREITSQHQAIERMHELGFHTNETGRKLANLDEVFDFIDEYTAKRNSLTYGIDGIVLKVDDLSLEQQLGNTVKVPRWEIAYKFPPEEQETIVRDIVWTVGRTGVVTPTAVMDPVQLAGTTVARASLHNPDYLNEKGVRIGDTVKLHKAGDIIPEISEVVLSKRPADSVPYEIPTTCPSCGQKLVHLEDEVALRCINPSCPAQVEEGIIHFASRPAMNIAGLGPKIVKQLIAKDLVHNVADLYHLTEDDLAQLDHFKEKSINNLLTAIDNSKKNSVELLITGLGIDHVGAKAARLIAQKFKNLEKIMSLGVQDIASIDTIGMTTAESMTTYFAQPEAQKLIEELRESGLNMDYLGADEPEEAPDNPFKDKTVVLTGKLEHYTRSEFTKKLQALGAKVTGSVSHKTDYVIYGKDAGSKYNKAEQLGVPLLTEEEAIAQIE.

Residues 37–41, 86–87, and glutamate 116 each bind NAD(+); these read DNVYD and SM. Catalysis depends on lysine 118, which acts as the N6-AMP-lysine intermediate. Arginine 139, glutamate 173, lysine 288, and lysine 312 together coordinate NAD(+). Positions 406, 409, 424, and 429 each coordinate Zn(2+). One can recognise a BRCT domain in the interval 591–668; the sequence is APDNPFKDKT…TEEEAIAQIE (78 aa).

This sequence belongs to the NAD-dependent DNA ligase family. LigA subfamily. The cofactor is Mg(2+). Requires Mn(2+) as cofactor.

It carries out the reaction NAD(+) + (deoxyribonucleotide)n-3'-hydroxyl + 5'-phospho-(deoxyribonucleotide)m = (deoxyribonucleotide)n+m + AMP + beta-nicotinamide D-nucleotide.. DNA ligase that catalyzes the formation of phosphodiester linkages between 5'-phosphoryl and 3'-hydroxyl groups in double-stranded DNA using NAD as a coenzyme and as the energy source for the reaction. It is essential for DNA replication and repair of damaged DNA. The chain is DNA ligase from Lactobacillus helveticus (strain DPC 4571).